A 422-amino-acid polypeptide reads, in one-letter code: MLSSLRRVVPSLPRGSRSLTSQQIFDREKKFGCHNYKPLPVALSKGEGCFVWDVEGKKYFDFLAAYSAVNQGHCHPKLLKVVQEQASTLTLTSRAFYNNVLGEYEEYVTKLFKYDKVLPMNTGVEACESAVKLARRWAYDVKGVKDNEAVVVFAENNFWGRSIAAISASTDPDSFARFGPFVPGFKTVPYNNLKAVEDAIKDKNVAAFMVEPIQGEAGVVLPDPGYLKGVSDLCKKYNVLFITDEVQSGLGRSGKLLAHYHDNVRPDIVVLGKALSGGFYPVSAVLCDDNVMMNIKPGEHGSTYGGNPLACKVAIAALEILQEEKLVENSAVMGDLLMSKLKTLPKDIVSTVRGKGLFCAIVINKKYDAWKVCLKLKENGLLAKNTHGDIIRFAPPLCINKEQVEQAADIIIKTVTDFAKQN.

Lysine 273 carries the post-translational modification N6-(pyridoxal phosphate)lysine.

This sequence belongs to the class-III pyridoxal-phosphate-dependent aminotransferase family. Pyridoxal 5'-phosphate is required as a cofactor.

The protein resides in the mitochondrion matrix. It carries out the reaction a 2-oxocarboxylate + L-ornithine = L-glutamate 5-semialdehyde + an L-alpha-amino acid. It participates in amino-acid biosynthesis; L-proline biosynthesis; L-glutamate 5-semialdehyde from L-ornithine: step 1/1. The sequence is that of Probable ornithine aminotransferase, mitochondrial from Caenorhabditis elegans.